A 1077-amino-acid polypeptide reads, in one-letter code: Carbamoyl phosphate synthase large chain (1077 aa).

The tract at residues 1-403 is carboxyphosphate synthetic domain; that stretch reads MPKRTDIQSI…SLHKALRGLE (403 aa). The ATP site is built by arginine 129, arginine 169, glycine 175, glycine 176, glutamate 208, leucine 210, glutamate 215, glycine 241, isoleucine 242, histidine 243, glutamine 285, and glutamate 299. Residues 133–328 form the ATP-grasp 1 domain; that stretch reads DKAMKSIGLE…IAKIAAKLAV (196 aa). Mg(2+) contacts are provided by glutamine 285, glutamate 299, and asparagine 301. Residues glutamine 285, glutamate 299, and asparagine 301 each coordinate Mn(2+). The tract at residues 404–553 is oligomerization domain; sequence VGATGFDEMV…YSSYDEECEA (150 aa). Residues 554-935 are carbamoyl phosphate synthetic domain; sequence NPTDKDKIMV…AYAKAELGCG (382 aa). An ATP-grasp 2 domain is found at 678–869; that stretch reads QAAVERLGLL…LAKIAARVMA (192 aa). Residues arginine 714, arginine 753, leucine 755, glutamate 760, glycine 785, valine 786, histidine 787, serine 788, glutamine 828, and glutamate 840 each contribute to the ATP site. The Mg(2+) site is built by glutamine 828, glutamate 840, and asparagine 842. Mn(2+) is bound by residues glutamine 828, glutamate 840, and asparagine 842. An MGS-like domain is found at 936–1077; the sequence is SVYPEGGRAL…HAKVKASLEA (142 aa). Residues 936 to 1077 form an allosteric domain region; it reads SVYPEGGRAL…HAKVKASLEA (142 aa).

This sequence belongs to the CarB family. As to quaternary structure, composed of two chains; the small (or glutamine) chain promotes the hydrolysis of glutamine to ammonia, which is used by the large (or ammonia) chain to synthesize carbamoyl phosphate. Tetramer of heterodimers (alpha,beta)4. It depends on Mg(2+) as a cofactor. Requires Mn(2+) as cofactor.

It catalyses the reaction hydrogencarbonate + L-glutamine + 2 ATP + H2O = carbamoyl phosphate + L-glutamate + 2 ADP + phosphate + 2 H(+). It carries out the reaction hydrogencarbonate + NH4(+) + 2 ATP = carbamoyl phosphate + 2 ADP + phosphate + 2 H(+). The protein operates within amino-acid biosynthesis; L-arginine biosynthesis; carbamoyl phosphate from bicarbonate: step 1/1. Its pathway is pyrimidine metabolism; UMP biosynthesis via de novo pathway; (S)-dihydroorotate from bicarbonate: step 1/3. Its function is as follows. Large subunit of the glutamine-dependent carbamoyl phosphate synthetase (CPSase). CPSase catalyzes the formation of carbamoyl phosphate from the ammonia moiety of glutamine, carbonate, and phosphate donated by ATP, constituting the first step of 2 biosynthetic pathways, one leading to arginine and/or urea and the other to pyrimidine nucleotides. The large subunit (synthetase) binds the substrates ammonia (free or transferred from glutamine from the small subunit), hydrogencarbonate and ATP and carries out an ATP-coupled ligase reaction, activating hydrogencarbonate by forming carboxy phosphate which reacts with ammonia to form carbamoyl phosphate. This Vibrio parahaemolyticus serotype O3:K6 (strain RIMD 2210633) protein is Carbamoyl phosphate synthase large chain.